A 325-amino-acid chain; its full sequence is MIARIWSGESPLWRLLLPLSWLYGLVSGAIRLSYKLGLKRAWRAPVPVVVVGNLTAGGNGKTPVVIWLVEKLQQRGVRVGVVSRGYGGKAAAYPLLLTPETTTAEAGDEPVLIYQRTGAPVAVAPERAAAVKAILAAHNVQIIITDDGLQHYRLARDIEIVVIDGVRRFGNGWWLPAGPMRERASRLKTVDAAIVNGGVARAGEIPMQLAPGLAVNLRTGARCDVAQLSNIVAMAGIGHPPRFFATLEACGAHPQKCVPLADHQTLAPADVQALVGEGQTLVMTEKDAVKCRAFAEDNWWFLPVDARLSGEQPDKLLEHITSLVR.

Thr55–Thr62 lines the ATP pocket.

The protein belongs to the LpxK family.

It carries out the reaction a lipid A disaccharide + ATP = a lipid IVA + ADP + H(+). It participates in glycolipid biosynthesis; lipid IV(A) biosynthesis; lipid IV(A) from (3R)-3-hydroxytetradecanoyl-[acyl-carrier-protein] and UDP-N-acetyl-alpha-D-glucosamine: step 6/6. Transfers the gamma-phosphate of ATP to the 4'-position of a tetraacyldisaccharide 1-phosphate intermediate (termed DS-1-P) to form tetraacyldisaccharide 1,4'-bis-phosphate (lipid IVA). The polypeptide is Tetraacyldisaccharide 4'-kinase (Salmonella typhi).